Here is a 351-residue protein sequence, read N- to C-terminus: Columbamine O-methyltransferase (351 aa).

G198, D221, D241, M242, and K255 together coordinate S-adenosyl-L-methionine. The Proton acceptor role is filled by H259.

This sequence belongs to the class I-like SAM-binding methyltransferase superfamily. Cation-independent O-methyltransferase family. COMT subfamily. As to quaternary structure, homodimer.

It catalyses the reaction columbamine + S-adenosyl-L-methionine = palmatine + S-adenosyl-L-homocysteine + H(+). It carries out the reaction (S)-tetrahydrocolumbamine + S-adenosyl-L-methionine = (S)-tetrahydropalmatine + S-adenosyl-L-homocysteine + H(+). Its pathway is alkaloid biosynthesis; palmatine biosynthesis; palmatine from columbamine: step 1/1. In terms of biological role, catalyzes the conversion of tetrahydrocolumbamine to (S)-tetrahydropalmatine and of columbamine to palmatine, an isoquinoline alkaloid. This chain is Columbamine O-methyltransferase, found in Coptis japonica (Japanese goldthread).